The sequence spans 121 residues: Putative ankyrin repeat protein L215 (121 aa).

ANK repeat units follow at residues 10–40 (QYDS…SFKE) and 42–71 (IHET…NKLV).

The sequence is that of Putative ankyrin repeat protein L215 from Acanthamoeba polyphaga mimivirus (APMV).